The primary structure comprises 147 residues: Small ribosomal subunit protein uS12 (147 aa).

This sequence belongs to the universal ribosomal protein uS12 family. In terms of assembly, part of the 30S ribosomal subunit.

Its function is as follows. With S4 and S5 plays an important role in translational accuracy. Located at the interface of the 30S and 50S subunits. This Methanococcus maripaludis (strain C5 / ATCC BAA-1333) protein is Small ribosomal subunit protein uS12.